The following is a 439-amino-acid chain: Tol-Pal system protein TolB (439 aa).

The first 22 residues, 1–22, serve as a signal peptide directing secretion; that stretch reads MTKFPRWLAMLVGLLFPLSALT.

This sequence belongs to the TolB family. In terms of assembly, the Tol-Pal system is composed of five core proteins: the inner membrane proteins TolA, TolQ and TolR, the periplasmic protein TolB and the outer membrane protein Pal. They form a network linking the inner and outer membranes and the peptidoglycan layer.

It localises to the periplasm. Its function is as follows. Part of the Tol-Pal system, which plays a role in outer membrane invagination during cell division and is important for maintaining outer membrane integrity. The polypeptide is Tol-Pal system protein TolB (Xylella fastidiosa (strain 9a5c)).